The chain runs to 146 residues: Large ribosomal subunit protein uL15 (146 aa).

The disordered stretch occupies residues 1-54 (MNLTDLRPADGSKQSGNFRRGRGHGSGNGKTAGKGHKGQKARSGAPRVGFEGGQ).

This sequence belongs to the universal ribosomal protein uL15 family. Part of the 50S ribosomal subunit.

Functionally, binds to the 23S rRNA. This Lachnoclostridium phytofermentans (strain ATCC 700394 / DSM 18823 / ISDg) (Clostridium phytofermentans) protein is Large ribosomal subunit protein uL15.